Consider the following 641-residue polypeptide: MLRATALHEWLMTPTVAQDVSTRTREPQHWAALGALGIVYGDLGTSPLYTLQTVVQATGGHFTTASALGILSLLVWTLIITISIKYCLFVMRADNHGEGGILALMSLVGANRFKGTAKILAVMGLLGAALLYGDGVITPAISVLSALEGVNVVTGSLKPFVMPAAVAILIVFFAAQRFGTARIGAAFGPIMLLWFLVIAVLGLTGIVRNPSVLTALDPRHAIGFLAHSGGNGMLVLGGVFLCITGGEALYADMGHFGPGPIRLSWYAIVLPSLLLSYAGQTALLIQKGTIEGNPFFQLCPTWGVYPLVFLAMIATIIASQSIITGSFSMTRQAMQLGWLPGFHIRQTSDKVYGQIYVPVVNWMMMVATIGITIAFGSSDRLAGAYGTAVSTTMLLTTCLLFTAMRKTWRWPLAVSILIAGLFLIVDVGFFGANLLKIAEGGWLPLTFGALVFFLMLTWRSGIDAVRESLAQASEAPERFVADLAAGKVPRVPGTAIFLTRTYQKIPPLLIDHVKHMGALHQSVIALTILFEESPRIDDEERCGVEKIADGIWRVTMRFGFVEIPDLTAALKRVKGLDPSIDLDHAIYFATRDIIVARAGSSLFAHWRLPVFAFLYRNAVKVVDRFSLPPDRVVEIARQIEL.

Helical transmembrane passes span 31–51 (AALG…LYTL), 64–84 (TASA…TISI), 119–139 (ILAV…VITP), 155–175 (GSLK…FFAA), 183–203 (IGAA…VLGL), 221–241 (AIGF…GVFL), 265–285 (WYAI…ALLI), 298–318 (LCPT…TIIA), 355–375 (IYVP…TIAF), 381–401 (LAGA…CLLF), 412–432 (LAVS…FFGA), and 437–457 (IAEG…LMLT).

Belongs to the HAK/KUP transporter (TC 2.A.72) family.

Its subcellular location is the cell inner membrane. The catalysed reaction is K(+)(in) + H(+)(in) = K(+)(out) + H(+)(out). In terms of biological role, transport of potassium into the cell. Likely operates as a K(+):H(+) symporter. This is Probable potassium transport system protein Kup 4 from Bradyrhizobium sp. (strain BTAi1 / ATCC BAA-1182).